The chain runs to 31 residues: Cytochrome b6-f complex subunit 6 (31 aa).

A helical transmembrane segment spans residues 5 to 25 (ISYLGILVGALLFVTITFLTL).

It belongs to the PetL family. In terms of assembly, the 4 large subunits of the cytochrome b6-f complex are cytochrome b6, subunit IV (17 kDa polypeptide, PetD), cytochrome f and the Rieske protein, while the 4 small subunits are PetG, PetL, PetM and PetN. The complex functions as a dimer.

Its subcellular location is the plastid. The protein localises to the chloroplast thylakoid membrane. Its function is as follows. Component of the cytochrome b6-f complex, which mediates electron transfer between photosystem II (PSII) and photosystem I (PSI), cyclic electron flow around PSI, and state transitions. PetL is important for photoautotrophic growth as well as for electron transfer efficiency and stability of the cytochrome b6-f complex. The polypeptide is Cytochrome b6-f complex subunit 6 (Chlorokybus atmophyticus (Soil alga)).